The following is a 508-amino-acid chain: Bifunctional NAD(P)H-hydrate repair enzyme Nnr (508 aa).

The tract at residues 1 to 224 (MSGLCACTLV…QVRSVLGEDH (224 aa)) is NAD(P)H-hydrate epimerase. In terms of domain architecture, YjeF N-terminal spans 15-217 (VQQLEAALFA…EIGFSEAQVR (203 aa)). Residues 64-68 (HNGGD) form an NADPHX 1; for epimerase activity region. K(+) contacts are provided by asparagine 65 and aspartate 126. The segment at 130 to 136 (GFGLERP) is NADPHX 1; for epimerase activity. Positions 141 and 159 each coordinate (6S)-NADPHX. Serine 162 is a K(+) binding site. The 275-residue stretch at 232 to 506 (PDAARAGLPL…LGLLPFLAAD (275 aa)) folds into the YjeF C-terminal domain. Residues 232 to 508 (PDAARAGLPL…LLPFLAADGP (277 aa)) form an ADP-dependent (S)-NAD(P)H-hydrate dehydratase region. Glycine 334 is a (6S)-NADPHX binding site. Residues 383-389 (HPGEFKR) are NADPHX 2; for dehydratase activity. ADP contacts are provided by residues 417–421 (KGART) and 437–446 (SPALARGGSG). A (6S)-NADPHX-binding site is contributed by aspartate 447.

In the N-terminal section; belongs to the NnrE/AIBP family. This sequence in the C-terminal section; belongs to the NnrD/CARKD family. It depends on K(+) as a cofactor.

The enzyme catalyses (6S)-NADHX + ADP = AMP + phosphate + NADH + H(+). It carries out the reaction (6S)-NADPHX + ADP = AMP + phosphate + NADPH + H(+). It catalyses the reaction (6R)-NADHX = (6S)-NADHX. The catalysed reaction is (6R)-NADPHX = (6S)-NADPHX. Its function is as follows. Bifunctional enzyme that catalyzes the epimerization of the S- and R-forms of NAD(P)HX and the dehydration of the S-form of NAD(P)HX at the expense of ADP, which is converted to AMP. This allows the repair of both epimers of NAD(P)HX, a damaged form of NAD(P)H that is a result of enzymatic or heat-dependent hydration. This chain is Bifunctional NAD(P)H-hydrate repair enzyme Nnr (nnr), found in Gloeobacter violaceus (strain ATCC 29082 / PCC 7421).